The primary structure comprises 828 residues: Periplasmic nitrate reductase (828 aa).

The tat-type signal signal peptide spans Met1 to Ala32. The 4Fe-4S Mo/W bis-MGD-type domain maps to Ile38–Asp94. The [4Fe-4S] cluster site is built by Cys45, Cys48, Cys52, and Cys80. Mo-bis(molybdopterin guanine dinucleotide)-binding positions include Lys82, Gln149, Asn174, Cys178, Trp211–Met218, Ser242–His246, Gln261–Asp263, Met372, Gln376, Asn482, Ser508–Asp509, Lys531, Asp558, and Thr718–Thr727. Residue Phe794 participates in substrate binding. Mo-bis(molybdopterin guanine dinucleotide) is bound by residues Asn802 and Lys819.

It belongs to the prokaryotic molybdopterin-containing oxidoreductase family. NasA/NapA/NarB subfamily. As to quaternary structure, component of the periplasmic nitrate reductase NapAB complex composed of NapA and NapB. [4Fe-4S] cluster is required as a cofactor. The cofactor is Mo-bis(molybdopterin guanine dinucleotide). Post-translationally, predicted to be exported by the Tat system. The position of the signal peptide cleavage has not been experimentally proven.

It localises to the periplasm. The enzyme catalyses 2 Fe(II)-[cytochrome] + nitrate + 2 H(+) = 2 Fe(III)-[cytochrome] + nitrite + H2O. Functionally, catalytic subunit of the periplasmic nitrate reductase complex NapAB. Receives electrons from NapB and catalyzes the reduction of nitrate to nitrite. The chain is Periplasmic nitrate reductase from Pasteurella multocida (strain Pm70).